The chain runs to 351 residues: Protein-glutamate methylesterase/protein-glutamine glutaminase 2 (351 aa).

One can recognise a Response regulatory domain in the interval Lys-4 to Leu-121. Asp-55 bears the 4-aspartylphosphate mark. Residues Arg-156 to Val-348 form the CheB-type methylesterase domain. Residues Ser-168, His-194, and Asp-290 contribute to the active site.

The protein belongs to the CheB family. Phosphorylated by CheA. Phosphorylation of the N-terminal regulatory domain activates the methylesterase activity.

The protein resides in the cytoplasm. It catalyses the reaction [protein]-L-glutamate 5-O-methyl ester + H2O = L-glutamyl-[protein] + methanol + H(+). It carries out the reaction L-glutaminyl-[protein] + H2O = L-glutamyl-[protein] + NH4(+). In terms of biological role, involved in chemotaxis. Part of a chemotaxis signal transduction system that modulates chemotaxis in response to various stimuli. Catalyzes the demethylation of specific methylglutamate residues introduced into the chemoreceptors (methyl-accepting chemotaxis proteins or MCP) by CheR. Also mediates the irreversible deamidation of specific glutamine residues to glutamic acid. This chain is Protein-glutamate methylesterase/protein-glutamine glutaminase 2, found in Shewanella oneidensis (strain ATCC 700550 / JCM 31522 / CIP 106686 / LMG 19005 / NCIMB 14063 / MR-1).